The sequence spans 514 residues: MMSAAICTLLAVIATTSLGLLFLSIIRRGKLPPGPPPKPIVGNLHQFPKVNRAQVFDQWHRTYGPIVGLRLGLKKLILVGSYQVARELLDRRGAIYSSRPRVVMAGEIANRGNHTALMPYGPKWKLHNRVHSALMNPTMVKRYQYLQDIESRQLVHDLLQGSTSDFGARIHRYSSSLLFALAYGRRLPTSDAFEIQENAHIAHQFINNLAAGRWLVDAFPVLNYLPTWLAPWKKIGEQLYQRKFGLLQRHTALALEKPVWNWTKHFHGPKKPAEASWEELLNIIGVLYEAGADTTTSALEAFVMAAVLHPDAVRRVQAEIDALVGGAARMPSFEDVQQLPFVDAFVNETMRWRPIAPEGVPHSLMKEDEYEGFTIPKNSIVIANQWHMAMDPATFTDPQAFRPERWLEDPKLPISAFGFGRRACPGRHIALNSMKIVMCRLLWAYDFDHAYENGRKVTIDPDNFVREGVLSKPAPFKAALRVRSPAHEKTIQSALRESEQDEDKILAHIAAGLA.

Residues 6-26 (ICTLLAVIATTSLGLLFLSII) form a helical membrane-spanning segment. N-linked (GlcNAc...) asparagine glycans are attached at residues N113, N261, and N347. C424 lines the heme pocket.

It belongs to the cytochrome P450 family. Heme is required as a cofactor.

The protein resides in the membrane. The enzyme catalyses asperaculane D + reduced [NADPH--hemoprotein reductase] + O2 = asperaculane E + oxidized [NADPH--hemoprotein reductase] + H2O + H(+). The protein operates within secondary metabolite biosynthesis. Its function is as follows. Cytochrome P450 monooxygenase; part of the gene cluster that mediates the biosynthesis of aculenes, a unique type of norsesquiterpenes that contain a nordaucane skeleton linked to an L-proline moiety and are of mixed biosynthetic origin. The pathway begins with the synthesis of dauca-4,7-diene by the terpene cyclase aneC using farnesyl pyrophosphate (FPP) as substrate. The cytochrome P450 monooxygenase aneF then performs the initial oxidation at C-12 of dauca-4,7-diene to yield asperaculane D. Asperaculane D is substrate of the cytochrome P450 monooxygenase aneD for C-10 hydroxylation to yield asperaculane E. The cytochrome P450 monooxygenase aneG then converts asperaculane E into aculene D via C-2 oxidation. The monomodular nonribosomal peptide synthtase aneB adenylates L-proline and the thiohydrolase aneE transfers this activated L-proline derivative to aculenes D and C to produce respectively aculenes B and A. The dioxygenase aneA converts aculene D into aculene C, and aculene B into aculene A by introducing the 5,6-alkene moiety. Asperculanes A, B, C and F, as well as 14-prolyl asperculane C, might be shunt products of the pathway. This Aspergillus aculeatus (strain ATCC 16872 / CBS 172.66 / WB 5094) protein is Cytochrome P450 monooxygenase aneD.